A 194-amino-acid polypeptide reads, in one-letter code: Outer-membrane lipoprotein LolB (194 aa).

Positions 1–18 (MTLLLRLFTLGCLLLLAG) are cleaved as a signal peptide. Cysteine 19 is lipidated: N-palmitoyl cysteine. Residue cysteine 19 is the site of S-diacylglycerol cysteine attachment.

It belongs to the LolB family. In terms of assembly, monomer.

The protein resides in the cell outer membrane. Functionally, plays a critical role in the incorporation of lipoproteins in the outer membrane after they are released by the LolA protein. The sequence is that of Outer-membrane lipoprotein LolB from Aeromonas hydrophila subsp. hydrophila (strain ATCC 7966 / DSM 30187 / BCRC 13018 / CCUG 14551 / JCM 1027 / KCTC 2358 / NCIMB 9240 / NCTC 8049).